We begin with the raw amino-acid sequence, 78 residues long: Large ribosomal subunit protein bL28 (78 aa).

This sequence belongs to the bacterial ribosomal protein bL28 family.

The protein is Large ribosomal subunit protein bL28 (rpmB) of Treponema pallidum (strain Nichols).